Consider the following 455-residue polypeptide: Indoleacetamide hydrolase (455 aa).

Residues Lys71 and Ser146 each act as charge relay system in the active site. The active-site Acyl-ester intermediate is the Ser170.

It belongs to the amidase family.

It participates in plant hormone metabolism; auxin biosynthesis. Functionally, hydrolyzes indole-3-acetamide (IAM) into indole-3-acetic acid (IAA). The chain is Indoleacetamide hydrolase (iaaH) from Pseudomonas savastanoi (Pseudomonas syringae pv. savastanoi).